The primary structure comprises 428 residues: MTRSETLFEQAKKTIPGGVNSPVRAFNGVGGSPRFIEKADGAYIYDADGKAYIDYVGSWGPMILGHNHPKIRQAVLDAVENGLSFGAPTELEVRMAEKVIEMVPSMEQVRMVSSGTEATMSAIRLARGFTNRDKILKFEGCYHGHADCLLVKAGSGALTLGQPSSPGIPEDFAKHTLTAVYNELESVKTLFEQYPEEIACIILEPVAGNMNCIPPIPGFLEGLRALCDQYGALLIIDEVMTGFRVSKSGAQGHYGITPDLTTLGKVIGGGMPVGAFGGRKEVMQFIAPTGPVYQAGTLSGNPIAMSAGLAQMEELCAEGLYEELAAKTKRIAEGFKAAANKHGIPLSINYVGGMFGFFFTELEQVTRFDQVTQCDAEAFRTFYHGMLDEGVYLAPSAYEAGFLSMAHGEKELEETLAAADRVFARMAK.

K265 carries the post-translational modification N6-(pyridoxal phosphate)lysine.

The protein belongs to the class-III pyridoxal-phosphate-dependent aminotransferase family. HemL subfamily. As to quaternary structure, homodimer. Pyridoxal 5'-phosphate serves as cofactor.

It localises to the cytoplasm. The catalysed reaction is (S)-4-amino-5-oxopentanoate = 5-aminolevulinate. It functions in the pathway porphyrin-containing compound metabolism; protoporphyrin-IX biosynthesis; 5-aminolevulinate from L-glutamyl-tRNA(Glu): step 2/2. This is Glutamate-1-semialdehyde 2,1-aminomutase from Shewanella loihica (strain ATCC BAA-1088 / PV-4).